The sequence spans 391 residues: Cystathionine beta-lyase MetC (391 aa).

The residue at position 196 (Lys-196) is an N6-(pyridoxal phosphate)lysine.

It belongs to the trans-sulfuration enzymes family. In terms of assembly, homotetramer. The cofactor is pyridoxal 5'-phosphate.

It carries out the reaction L,L-cystathionine + H2O = L-homocysteine + pyruvate + NH4(+). The catalysed reaction is an S-substituted L-cysteine + H2O = a thiol + pyruvate + NH4(+). It functions in the pathway amino-acid biosynthesis; L-methionine biosynthesis via de novo pathway; L-homocysteine from L-cystathionine: step 1/1. With respect to regulation, cystathionine beta-lyase activity is inhibited by sweat components such as glycine, serine and ammonium sulfate. Inhibited by cystathionine at a concentration higher than 6 mM. Catalyzes the transformation of cystathionine into homocysteine. Can also catalyze, at low levels, the conversion of cystathionine into methionine and the conversion of methionine into methanethiol. The chain is Cystathionine beta-lyase MetC from Staphylococcus haemolyticus (strain JCSC1435).